Consider the following 361-residue polypeptide: Alanine racemase 2 (361 aa).

Residue K30 is the Proton acceptor; specific for D-alanine of the active site. Position 30 is an N6-(pyridoxal phosphate)lysine (K30). R122 is a binding site for substrate. The Proton acceptor; specific for L-alanine role is filled by Y256. Position 303 (M303) interacts with substrate.

Belongs to the alanine racemase family. Requires pyridoxal 5'-phosphate as cofactor.

It carries out the reaction L-alanine = D-alanine. It functions in the pathway amino-acid biosynthesis; D-alanine biosynthesis; D-alanine from L-alanine: step 1/1. In terms of biological role, catalyzes the interconversion of L-alanine and D-alanine. May also act on other amino acids. In Staphylococcus aureus (strain COL), this protein is Alanine racemase 2 (alr2).